The primary structure comprises 320 residues: UDP-N-acetylenolpyruvoylglucosamine reductase (320 aa).

One can recognise an FAD-binding PCMH-type domain in the interval 35 to 216 (RAGGPAQVLF…KQAMDEVQHH (182 aa)). Residue R181 is part of the active site. Residue S230 is the Proton donor of the active site. The active site involves E300.

Belongs to the MurB family. The cofactor is FAD.

The protein localises to the cytoplasm. It catalyses the reaction UDP-N-acetyl-alpha-D-muramate + NADP(+) = UDP-N-acetyl-3-O-(1-carboxyvinyl)-alpha-D-glucosamine + NADPH + H(+). Its pathway is cell wall biogenesis; peptidoglycan biosynthesis. Cell wall formation. The polypeptide is UDP-N-acetylenolpyruvoylglucosamine reductase (Brucella anthropi (strain ATCC 49188 / DSM 6882 / CCUG 24695 / JCM 21032 / LMG 3331 / NBRC 15819 / NCTC 12168 / Alc 37) (Ochrobactrum anthropi)).